The chain runs to 184 residues: Protein Iojap-related, mitochondrial (184 aa).

Residues 1–39 constitute a mitochondrion transit peptide; sequence MLTTLRSRCSSLLLNQSWKLAPNRIFASSPSFSSSAGIS.

The protein belongs to the Iojap/RsfS family.

The protein localises to the mitochondrion. Functionally, may be a ribosome silencing factor involved in organelle biogenesis and required for germination. This chain is Protein Iojap-related, mitochondrial, found in Arabidopsis thaliana (Mouse-ear cress).